The primary structure comprises 144 residues: Small ribosomal subunit protein eS10A (144 aa).

A disordered region spans residues 90–144 (THKRQVRPTAPRAGRPEPRERASADAGYRRAEKKDEGAAPSGFAPSFRGGFGRPQ). Basic and acidic residues predominate over residues 103–126 (GRPEPRERASADAGYRRAEKKDEG).

Belongs to the eukaryotic ribosomal protein eS10 family. As to quaternary structure, component of the small ribosomal subunit (SSU). Mature yeast ribosomes consist of a small (40S) and a large (60S) subunit. The 40S small subunit contains 1 molecule of ribosomal RNA (18S rRNA) and at least 33 different proteins. The large 60S subunit contains 3 rRNA molecules (25S, 5.8S and 5S rRNA) and at least 46 different proteins. eS10 interacts with GCN1 (via middle region); this interaction is direct and promotes GCN2 kinase activity.

The protein resides in the cytoplasm. Component of the ribosome, a large ribonucleoprotein complex responsible for the synthesis of proteins in the cell. The small ribosomal subunit (SSU) binds messenger RNAs (mRNAs) and translates the encoded message by selecting cognate aminoacyl-transfer RNA (tRNA) molecules. The large subunit (LSU) contains the ribosomal catalytic site termed the peptidyl transferase center (PTC), which catalyzes the formation of peptide bonds, thereby polymerizing the amino acids delivered by tRNAs into a polypeptide chain. The nascent polypeptides leave the ribosome through a tunnel in the LSU and interact with protein factors that function in enzymatic processing, targeting, and the membrane insertion of nascent chains at the exit of the ribosomal tunnel. eS10 plays a role as a positive regulator of the GCN2 kinase activity by stimulating GCN1-mediated GCN2 activation. This Schizosaccharomyces pombe (strain 972 / ATCC 24843) (Fission yeast) protein is Small ribosomal subunit protein eS10A (rps1001).